Here is a 793-residue protein sequence, read N- to C-terminus: Ferredoxin/F(420)H(2)-dependent CoB-CoM heterodisulfide reductase subunit A (793 aa).

147-170 contacts FAD; the sequence is GGGVAGIEAALNLAEAGFPVTMVE. 4Fe-4S ferredoxin-type domains lie at 233-264, 282-311, 571-600, and 601-629; these read RKPR…PMNY, QVVL…YEQK, MGAH…IENK, and KAVV…MRNF. [4Fe-4S] cluster is bound by residues C243, C246, C250, C254, C291, C294, C297, C301, C580, C583, C586, C590, C609, C612, C615, and C619.

It belongs to the HdrA family. As to quaternary structure, the ferredoxin/F(420)H(2)-dependent CoB-CoM heterodisulfide reductase is composed of three subunits; HdrA2, HdrB2 and HdrC2. Requires [4Fe-4S] cluster as cofactor. It depends on [2Fe-2S] cluster as a cofactor. FAD is required as a cofactor.

Its subcellular location is the cytoplasm. The catalysed reaction is coenzyme B + coenzyme M + 2 oxidized [2Fe-2S]-[ferredoxin] = coenzyme M-coenzyme B heterodisulfide + 2 reduced [2Fe-2S]-[ferredoxin] + 2 H(+). It catalyses the reaction coenzyme B + 2 oxidized coenzyme F420-(gamma-L-Glu)(n) + coenzyme M + 2 reduced [2Fe-2S]-[ferredoxin] + 4 H(+) = coenzyme M-coenzyme B heterodisulfide + 2 reduced coenzyme F420-(gamma-L-Glu)(n) + 2 oxidized [2Fe-2S]-[ferredoxin]. Its pathway is cofactor metabolism; coenzyme M-coenzyme B heterodisulfide reduction; coenzyme B and coenzyme M from coenzyme M-coenzyme B heterodisulfide: step 1/1. Part of a complex that catalyzes the reversible reduction of CoM-S-S-CoB to the thiol-coenzymes H-S-CoM (coenzyme M) and H-S-CoB (coenzyme B). Catalyzes the transfer of electrons from ferredoxin to CoM-S-S-CoB during methanogenesis from acetate. Electrons transfer from ferredoxin to CoM-S-S-CoB via HdrA2, HdrC2 and HdrB2. In addition, the complex can use electron bifurcation to direct electron pairs from reduced coenzyme F420 towards the reduction of both ferredoxin and CoB-CoM heterodisulfide. This activity may take place during Fe(III)-dependent anaerobic methane oxidation. The chain is Ferredoxin/F(420)H(2)-dependent CoB-CoM heterodisulfide reductase subunit A from Methanosarcina acetivorans (strain ATCC 35395 / DSM 2834 / JCM 12185 / C2A).